Reading from the N-terminus, the 496-residue chain is Glutamate--cysteine ligase B, chloroplastic (496 aa).

The transit peptide at 1–34 directs the protein to the chloroplast; it reads MAVASRLAVARVAPDGGAAGRRRRRRGRPVVAVP. Residues 14 to 53 are disordered; sequence PDGGAAGRRRRRRGRPVVAVPTAAGRGRGRGGAVAASPPT. A compositionally biased stretch (low complexity) spans 29–38; sequence PVVAVPTAAG. An intrachain disulfide couples cysteine 160 to cysteine 380.

This sequence belongs to the carboxylate-amine ligase family. Glutamate--cysteine ligase type 2 subfamily. Homodimer or monomer when oxidized or reduced, respectively. Post-translationally, the Cys-160-Cys-380 disulfide bridge is known to modulate the enzyme activity according to the redox status. The oxidized form constitutes the active enzyme.

It localises to the plastid. The protein resides in the chloroplast. The enzyme catalyses L-cysteine + L-glutamate + ATP = gamma-L-glutamyl-L-cysteine + ADP + phosphate + H(+). Its pathway is sulfur metabolism; glutathione biosynthesis; glutathione from L-cysteine and L-glutamate: step 1/2. The chain is Glutamate--cysteine ligase B, chloroplastic (GSH1-2) from Oryza sativa subsp. japonica (Rice).